The sequence spans 765 residues: MKFDFLLANDGNNIPNKQIKEDKSSPYEFTSNPNKLDPYSNNINNNNNNNNNNKSSIPSSVSLSSISSISSMPISTSLSLSSPSIVISNNNPVLSNEYQQQQQQQQQQQQQQQQQQQQQQQQQQQQQQQQQPVKTVNKKNSKSNKSNANKNNNNINNNNNNYTSMYDNKIQQQLQSIYKQQQQQQQQQYQTQTQTQTQTQTQTQTQTQTQTQTQNSSGGILNINSSINNNLNIYNNTSSNKFKHQHNQQAYNQNLSEINNSRNVTTSSVNANSNINPYPNSNSSINITTTTTTTTNNEILWTTTKPTSSTKHSVILSPPKKIDSYDSPQSSPPRQSSLLISTSSPPSPPLSPIQPTNIVQSSSSSFSSPTYIQQQQQQQQQQQQQQQQQQQQQQQQQQQQQQVETVNNIGNNKSNHTSLTPNLTSLSTKDYPPMYSLNNNNSININNNNNNNNNNNNNNNNNNNNNNNNNNNNNNNNNNNKINNNHFDLNDYQDDNQSSYSSPDITTTHNRYSQQQQQQNNNNQSNYHIDHLNDKSIMKPTKKQIKKQSQPQEKLSKYSEDQIHEESEFLLASILLNLKDSNSTLPINNNNYNNNIGNFNNSTILKNISTTSSDDIGSSNNDYINGSISNEQHQYYSNKYSNQNYVQIDENNNNKNNKNNYVTNNIVNSNTDNYNYYSSHNDFDNNNNNNNNNNNNNNNNNNNNNNNNNNNNNNNNNNNNNNNNNNNNNNNNSSNNNSRNNYNNNSKKRSSSVQISPYPPSKSRI.

Disordered stretches follow at residues 9 to 61 (NDGN…PSSV), 128 to 164 (QQQQPVKTVNKKNSKSNKSNANKNNNNINNNNNNYTS), 265 to 289 (TTSSVNANSNINPYPNSNSSINITT), 301 to 373 (WTTT…TYIQ), 409 to 526 (IGNN…NQSN), 540 to 560 (PTKKQIKKQSQPQEKLSKYSE), and 668 to 765 (NSNT…KSRI). 2 stretches are compositionally biased toward low complexity: residues 40–61 (SNNINNNNNNNNNNKSSIPSSV) and 143–161 (SNKSNANKNNNNINNNNNN). 7 stretches are compositionally biased toward low complexity: residues 301–311 (WTTTKPTSSTK), 325–344 (YDSPQSSPPRQSSLLISTSS), 353–373 (IQPTNIVQSSSSSFSSPTYIQ), 414–428 (SNHTSLTPNLTSLST), 438–485 (NNNN…INNN), 495–504 (DNQSSYSSPD), and 513–526 (SQQQQQQNNNNQSN). The span at 668 to 745 (NSNTDNYNYY…NNSRNNYNNN (78 aa)) shows a compositional bias: low complexity.

This is an uncharacterized protein from Dictyostelium discoideum (Social amoeba).